The primary structure comprises 269 residues: Probable ribosomal RNA small subunit methyltransferase A (269 aa).

Residues His23, Leu25, Gly50, Glu71, Asp95, and Asn110 each coordinate S-adenosyl-L-methionine.

It belongs to the class I-like SAM-binding methyltransferase superfamily. rRNA adenine N(6)-methyltransferase family. RsmA subfamily.

It is found in the cytoplasm. In terms of biological role, specifically dimethylates two adjacent adenosines in the loop of a conserved hairpin near the 3'-end of 16S rRNA in the 30S particle. May play a critical role in biogenesis of 30S subunits. This Pyrococcus abyssi (strain GE5 / Orsay) protein is Probable ribosomal RNA small subunit methyltransferase A.